Reading from the N-terminus, the 85-residue chain is uncharacterized protein (85 aa).

To A.fulgidus AF_0255 and AF_1363.

This is an uncharacterized protein from Archaeoglobus fulgidus (strain ATCC 49558 / DSM 4304 / JCM 9628 / NBRC 100126 / VC-16).